A 239-amino-acid chain; its full sequence is Small ribosomal subunit protein uS3 (239 aa).

In terms of domain architecture, KH type-2 spans 39-107 (VRQVLRKKMS…PVHINVIEVR (69 aa)). Residues 214-239 (SQEKQDDGSRGDRNADRSSRRSREVR) are disordered. A compositionally biased stretch (basic and acidic residues) spans 216-239 (EKQDDGSRGDRNADRSSRRSREVR).

It belongs to the universal ribosomal protein uS3 family. In terms of assembly, part of the 30S ribosomal subunit. Forms a tight complex with proteins S10 and S14.

Binds the lower part of the 30S subunit head. Binds mRNA in the 70S ribosome, positioning it for translation. This Xylella fastidiosa (strain M23) protein is Small ribosomal subunit protein uS3.